Reading from the N-terminus, the 516-residue chain is L-amino-acid oxidase (516 aa).

An N-terminal signal peptide occupies residues M1–C18. C28 and C189 are oxidised to a cystine. Residues M61–A62, E81–A82, R89, and G103–R106 contribute to the FAD site. Substrate is bound by residues R106 and H239. Position 279 (V279) interacts with FAD. A disulfide bridge connects residues C349 and C430. N-linked (GlcNAc...) asparagine glycosylation occurs at N379. Y390 provides a ligand contact to substrate. FAD-binding positions include E475 and G482–T487. G482 to W483 provides a ligand contact to substrate.

It belongs to the flavin monoamine oxidase family. FIG1 subfamily. In terms of assembly, homodimer; non-covalently linked. Requires FAD as cofactor. Expressed by the venom gland.

The protein localises to the secreted. The catalysed reaction is an L-alpha-amino acid + O2 + H2O = a 2-oxocarboxylate + H2O2 + NH4(+). Functionally, catalyzes an oxidative deamination of predominantly hydrophobic and aromatic L-amino acids, thus producing hydrogen peroxide that may contribute to the diverse toxic effects of this enzyme. Exhibits diverse biological activities, such as hemolysis, edema, hemorrhage, apoptosis, antibacterial and antiparasitic activities, as well as regulation of platelet aggregation. Effects of snake L-amino oxidases on platelets are controversial, since they either induce aggregation or inhibit agonist-induced aggregation. These different effects are probably due to different experimental conditions. This chain is L-amino-acid oxidase, found in Crotalus adamanteus (Eastern diamondback rattlesnake).